A 73-amino-acid chain; its full sequence is Translation initiation factor IF-1 (73 aa).

One can recognise an S1-like domain in the interval 1–72; sequence MAKEDVIEVE…TKGRITYRFI (72 aa).

Belongs to the IF-1 family. Component of the 30S ribosomal translation pre-initiation complex which assembles on the 30S ribosome in the order IF-2 and IF-3, IF-1 and N-formylmethionyl-tRNA(fMet); mRNA recruitment can occur at any time during PIC assembly.

It localises to the cytoplasm. Its function is as follows. One of the essential components for the initiation of protein synthesis. Stabilizes the binding of IF-2 and IF-3 on the 30S subunit to which N-formylmethionyl-tRNA(fMet) subsequently binds. Helps modulate mRNA selection, yielding the 30S pre-initiation complex (PIC). Upon addition of the 50S ribosomal subunit IF-1, IF-2 and IF-3 are released leaving the mature 70S translation initiation complex. This is Translation initiation factor IF-1 from Lactobacillus johnsonii (strain CNCM I-12250 / La1 / NCC 533).